The following is a 134-amino-acid chain: Shikimate kinase (134 aa).

This sequence belongs to the shikimate kinase family.

It localises to the cytoplasm. It carries out the reaction shikimate + ATP = 3-phosphoshikimate + ADP + H(+). It participates in metabolic intermediate biosynthesis; chorismate biosynthesis; chorismate from D-erythrose 4-phosphate and phosphoenolpyruvate: step 5/7. The chain is Shikimate kinase (aroK) from Neisseria gonorrhoeae.